A 278-amino-acid polypeptide reads, in one-letter code: Tryptophan synthase alpha chain (278 aa).

Residues E50 and D61 each act as proton acceptor in the active site.

The protein belongs to the TrpA family. As to quaternary structure, tetramer of two alpha and two beta chains.

The enzyme catalyses (1S,2R)-1-C-(indol-3-yl)glycerol 3-phosphate + L-serine = D-glyceraldehyde 3-phosphate + L-tryptophan + H2O. The protein operates within amino-acid biosynthesis; L-tryptophan biosynthesis; L-tryptophan from chorismate: step 5/5. Functionally, the alpha subunit is responsible for the aldol cleavage of indoleglycerol phosphate to indole and glyceraldehyde 3-phosphate. This Nitrobacter hamburgensis (strain DSM 10229 / NCIMB 13809 / X14) protein is Tryptophan synthase alpha chain.